The primary structure comprises 509 residues: Dihydrolipoyl dehydrogenase, mitochondrial (509 aa).

The transit peptide at 1 to 35 directs the protein to the mitochondrion; the sequence is MQSWSRVYCTLAKRGHFNRIAHGLQGVSAVPLRTY. The residue at position 66 (Lys66) is an N6-acetyllysine; alternate. Lys66 carries the N6-succinyllysine; alternate modification. Residues 71-80 and Lys89 each bind FAD; that span reads EKNETLGGTC. An intrachain disulfide couples Cys80 to Cys85. N6-acetyllysine; alternate occurs at positions 104, 122, 132, and 143. An N6-succinyllysine; alternate mark is found at Lys104, Lys122, Lys132, and Lys143. Gly154 lines the FAD pocket. An N6-succinyllysine mark is found at Lys159 and Lys166. 183–185 lines the FAD pocket; it reads TGS. NAD(+) is bound by residues 220–227 and Glu243; that span reads GAGVIGVE. An N6-succinyllysine mark is found at Lys273 and Lys277. Val278 is a binding site for NAD(+). 2 positions are modified to phosphoserine: Ser285 and Ser297. Residue Gly314 participates in NAD(+) binding. Lys346 bears the N6-acetyllysine mark. FAD-binding positions include Asp355 and 361–364; that span reads MLAH. Lys410 is modified (N6-acetyllysine; alternate). Lys410 carries the post-translational modification N6-succinyllysine; alternate. Residues Lys417 and Lys420 each carry the N6-acetyllysine modification. At Lys430 the chain carries N6-succinyllysine. His487 acts as the Proton acceptor in catalysis. Ser502 carries the phosphoserine modification. Lys505 carries the post-translational modification N6-acetyllysine; alternate. The residue at position 505 (Lys505) is an N6-succinyllysine; alternate.

It belongs to the class-I pyridine nucleotide-disulfide oxidoreductase family. As to quaternary structure, homodimer. Part of the multimeric pyruvate dehydrogenase complex that contains multiple copies of pyruvate dehydrogenase (subunits PDHA (PDHA1 or PDHA2) and PDHB, E1), dihydrolipoamide acetyltransferase (DLAT, E2) and lipoamide dehydrogenase (DLD, E3). These subunits are bound to an inner core composed of about 48 DLAT and 12 PDHX molecules (by non covalent bonds). The 2-oxoglutarate dehydrogenase complex is composed of OGDH (2-oxoglutarate dehydrogenase; E1), DLST (dihydrolipoamide succinyltransferase; E2), DLD (dihydrolipoamide dehydrogenase; E3) and the assembly factor KGD4. It contains multiple copies of the three enzymatic components (E1, E2 and E3). In the nucleus, the 2-oxoglutarate dehydrogenase complex associates with KAT2A. Interacts with PDHX. FAD is required as a cofactor. Post-translationally, tyrosine phosphorylated. Expressed in heart (at protein level).

The protein localises to the mitochondrion matrix. The protein resides in the nucleus. It localises to the cell projection. It is found in the cilium. Its subcellular location is the flagellum. The protein localises to the cytoplasmic vesicle. The protein resides in the secretory vesicle. It localises to the acrosome. The enzyme catalyses N(6)-[(R)-dihydrolipoyl]-L-lysyl-[protein] + NAD(+) = N(6)-[(R)-lipoyl]-L-lysyl-[protein] + NADH + H(+). Lipoamide dehydrogenase is a component of the glycine cleavage system as well as an E3 component of three alpha-ketoacid dehydrogenase complexes (pyruvate-, alpha-ketoglutarate-, and branched-chain amino acid-dehydrogenase complex). The 2-oxoglutarate dehydrogenase complex is mainly active in the mitochondrion. A fraction of the 2-oxoglutarate dehydrogenase complex also localizes in the nucleus and is required for lysine succinylation of histones: associates with KAT2A on chromatin and provides succinyl-CoA to histone succinyltransferase KAT2A. In monomeric form may have additional moonlighting function as serine protease. Involved in the hyperactivation of spermatazoa during capacitation and in the spermatazoal acrosome reaction. The chain is Dihydrolipoyl dehydrogenase, mitochondrial (DLD) from Sus scrofa (Pig).